The sequence spans 208 residues: RxLR effector protein Avr1 (208 aa).

An N-terminal signal peptide occupies residues 1–22 (MGLMHRVLLLATFALLCMHAKA). A RxLR-dEER motif is present at residues 41 to 54 (RQLRTATMSDDEAR). Residues 70-92 (KIESWIQNKVTDDFVLSELKLVR) are W1-motif. The tract at residues 93-110 (LPGTSLADDPNFKLFQKF) is linker region ln1. The segment at 111-136 (KIGGWLEEKATTTKAWENLGLDSLPF) is W2-motif. The tract at residues 137–157 (DQVSKIDEFKTYTQYVTVLNK) is Y-motif. The segment at 158–170 (KASKLDIDQWHGL) is linker region ln2. The tract at residues 170–208 (LLSGGSPEELMAKAMILRTLGRDVLERRVMLGGHVVVPF) is T-region.

The protein belongs to the RxLR effector family. Interacts with host exocyst component Sec5.

It localises to the secreted. Its subcellular location is the host cytoplasm. It is found in the host nucleus. The protein resides in the host peroxisome. Functionally, secreted effector that acts as an elicitor of hypersensitive response (HR) specifically on plants carrying defense protein R1, through its interaction with this protein. Also acts as a virulence factor that promotes colonization and suppresses cell death induced by CRN2 as well as callose deposition, a hallmark of basal defense. Interacts with host exocyst component Sec5 and thereby disturbs vesicle trafficking, a cellular process that is important for basal defense. By targeting and stabilizing Sec5 in the cytoplasm, the exocyst complex is thus out of balance and not able to mediate the focal secretion of PR-1 and callose. The chain is RxLR effector protein Avr1 from Phytophthora infestans (strain T30-4) (Potato late blight agent).